A 309-amino-acid polypeptide reads, in one-letter code: Aspartate carbamoyltransferase catalytic subunit (309 aa).

Residues Arg58 and Thr59 each contribute to the carbamoyl phosphate site. Lys86 serves as a coordination point for L-aspartate. Residues Arg108, His136, and Gln139 each coordinate carbamoyl phosphate. Positions 169 and 223 each coordinate L-aspartate. Carbamoyl phosphate contacts are provided by Gly265 and Pro266.

This sequence belongs to the aspartate/ornithine carbamoyltransferase superfamily. ATCase family. Heterododecamer (2C3:3R2) of six catalytic PyrB chains organized as two trimers (C3), and six regulatory PyrI chains organized as three dimers (R2).

The enzyme catalyses carbamoyl phosphate + L-aspartate = N-carbamoyl-L-aspartate + phosphate + H(+). It participates in pyrimidine metabolism; UMP biosynthesis via de novo pathway; (S)-dihydroorotate from bicarbonate: step 2/3. In terms of biological role, catalyzes the condensation of carbamoyl phosphate and aspartate to form carbamoyl aspartate and inorganic phosphate, the committed step in the de novo pyrimidine nucleotide biosynthesis pathway. This is Aspartate carbamoyltransferase catalytic subunit from Akkermansia muciniphila (strain ATCC BAA-835 / DSM 22959 / JCM 33894 / BCRC 81048 / CCUG 64013 / CIP 107961 / Muc).